Reading from the N-terminus, the 139-residue chain is Small ribosomal subunit protein uS12 (139 aa).

Residues 1–21 (MPTINQLVRKGRKAVQEKSTA) form a disordered region. Asp-102 carries the 3-methylthioaspartic acid modification.

Belongs to the universal ribosomal protein uS12 family. As to quaternary structure, part of the 30S ribosomal subunit. Contacts proteins S8 and S17. May interact with IF1 in the 30S initiation complex.

Its function is as follows. With S4 and S5 plays an important role in translational accuracy. In terms of biological role, interacts with and stabilizes bases of the 16S rRNA that are involved in tRNA selection in the A site and with the mRNA backbone. Located at the interface of the 30S and 50S subunits, it traverses the body of the 30S subunit contacting proteins on the other side and probably holding the rRNA structure together. The combined cluster of proteins S8, S12 and S17 appears to hold together the shoulder and platform of the 30S subunit. The sequence is that of Small ribosomal subunit protein uS12 from Alkaliphilus metalliredigens (strain QYMF).